Consider the following 395-residue polypeptide: Transcription termination/antitermination protein NusA (395 aa).

The S1 motif domain occupies 137 to 201 (NSVLMGQVIL…TKKGLLLELS (65 aa)). KH domains are found at residues 243–291 (SHNA…TLAL) and 331–378 (KVRL…NESE).

This sequence belongs to the NusA family. As to quaternary structure, monomer. Binds directly to the core enzyme of the DNA-dependent RNA polymerase and to nascent RNA.

The protein resides in the cytoplasm. In terms of biological role, participates in both transcription termination and antitermination. The polypeptide is Transcription termination/antitermination protein NusA (Helicobacter pylori (strain ATCC 700392 / 26695) (Campylobacter pylori)).